The sequence spans 146 residues: Prepilin peptidase-dependent protein D (146 aa).

A propeptide spans 1-6 (leader sequence); that stretch reads MDKQRG. Residue Phe-7 is modified to N-methylphenylalanine. The helical transmembrane segment at 7–27 threads the bilayer; it reads FTLIELMVVIGIIAILSAIGI.

Belongs to the N-Me-Phe pilin family.

The protein localises to the fimbrium. It localises to the membrane. Its function is as follows. Major component of the type IV pilus (T4P) that plays a role in cell adhesion and motility. Not produced when grown under standard laboratory conditions. The polypeptide is Prepilin peptidase-dependent protein D (ppdD) (Escherichia coli (strain K12)).